The sequence spans 53 residues: uncharacterized protein (53 aa).

Residues 13–35 (FLLHSFTFPIAHCPSFSWASFFF) traverse the membrane as a helical segment.

It is found in the membrane. This is an uncharacterized protein from Saccharomyces cerevisiae (strain ATCC 204508 / S288c) (Baker's yeast).